A 130-amino-acid chain; its full sequence is Small ribosomal subunit protein uS8B (130 aa).

This sequence belongs to the universal ribosomal protein uS8 family. Component of the small ribosomal subunit (SSU). Mature yeast ribosomes consist of a small (40S) and a large (60S) subunit. The 40S small subunit contains 1 molecule of ribosomal RNA (18S rRNA) and 33 different proteins (encoded by 57 genes). The large 60S subunit contains 3 rRNA molecules (25S, 5.8S and 5S rRNA) and 46 different proteins (encoded by 81 genes).

It localises to the cytoplasm. Functionally, component of the ribosome, a large ribonucleoprotein complex responsible for the synthesis of proteins in the cell. The small ribosomal subunit (SSU) binds messenger RNAs (mRNAs) and translates the encoded message by selecting cognate aminoacyl-transfer RNA (tRNA) molecules. The large subunit (LSU) contains the ribosomal catalytic site termed the peptidyl transferase center (PTC), which catalyzes the formation of peptide bonds, thereby polymerizing the amino acids delivered by tRNAs into a polypeptide chain. The nascent polypeptides leave the ribosome through a tunnel in the LSU and interact with protein factors that function in enzymatic processing, targeting, and the membrane insertion of nascent chains at the exit of the ribosomal tunnel. The polypeptide is Small ribosomal subunit protein uS8B (Saccharomyces cerevisiae (strain ATCC 204508 / S288c) (Baker's yeast)).